A 333-amino-acid polypeptide reads, in one-letter code: MKFLLVAALCALVAIGSCKPTREEIKTFEQFKKVFGKVYRNAEEEARREHHFKEQLKWVEEHNGIDGVEYAINEYSDMSEQEFSFHLSGGGLNFTYMKMEAAKEPLINTYGSLPQNFDWRQKARLTRIRQQGSCGSCWAFAAAGVAESLYSIQKQQSIELSEQELVDCTYNRYDSSYQCNGCGSGYSTEAFKYMIRTGLVEEENYPYNMRTQWCNPDVEGQRYHVSGYQQLRYQSSDEDVMYTIQQHGPVVIYMHGSNNYFRNLGNGVLRGVAYNDAYTDHAVILVGWGTVQGVDYWIIRNSWGTGWGNGGYGYVERGHNSLGINNFVTYATL.

The signal sequence occupies residues 1 to 18; the sequence is MKFLLVAALCALVAIGSC. A propeptide spans 19–108 (activation peptide); that stretch reads KPTREEIKTF…MEAAKEPLIN (90 aa). N93 carries an N-linked (GlcNAc...) asparagine glycan. 2 disulfide bridges follow: C134–C182 and C168–C214. C137 is a catalytic residue. Residues H281 and N301 contribute to the active site.

Belongs to the peptidase C1 family. In terms of assembly, homodimer.

Its function is as follows. Cysteine protease. This Blomia tropicalis (Mite) protein is Cysteine protease.